Here is a 249-residue protein sequence, read N- to C-terminus: MKPVPTYVQDKDESTLMFSVCSLVRDQAKYDRLLESFERFGFTPDKAEFLAADNREGNQFHGFSWHKQMLPRCKGRYVIFCHEDVELVDRGYDDLVAAIEALEEADPKWLVAGVAGSPWRPLNHSVTAQALHISDVFGNDRRRGNVPCRVESLDECFLLMRRLKPVLNSYDMQGFHYYGADLCLQAEFLGGRAYAIDFHLHHYGRAIADENFHRLRQEMAQKYRRWFPGRILHCVTGRVALGGGWYEAR.

The protein is ATP synthase subunits region ORF 6 of Fuscovulum blasticum (Rhodobacter blasticus).